Reading from the N-terminus, the 81-residue chain is Putative defensin-like protein 25 (81 aa).

The first 23 residues, 1–23, serve as a signal peptide directing secretion; it reads MASLKVFSFALILVLTFSVDVEG. Disulfide bonds link C33-C81, C43-C68, C52-C77, and C56-C79.

This sequence belongs to the DEFL family.

It localises to the secreted. This is Putative defensin-like protein 25 from Arabidopsis thaliana (Mouse-ear cress).